The primary structure comprises 1070 residues: Regulator of Ty1 transposition protein 107 (1070 aa).

4 BRCT domains span residues 2–103, 117–213, 260–352, and 369–453; these read STSL…QDSV, NPFH…LYHF, HPNK…FYMF, and PFHA…EQCY. Position 304 is a phosphoserine (S304). T532 bears the Phosphothreonine mark. A disordered region spans residues 572 to 659; that stretch reads SRASFPVVDS…LQVQLGQRTK (88 aa). A compositionally biased stretch (basic and acidic residues) spans 580–592; that stretch reads DSKKSNLQKKDSN. Phosphoserine is present on residues S591 and S593. Composition is skewed to basic and acidic residues over residues 603 to 615 and 622 to 645; these read CEGHEKREEKEFT and DAPKKQEIREQSRKKNDIDYKKEE. S720 is modified (phosphoserine). Over residues 722–731 the composition is skewed to basic and acidic residues; that stretch reads NDDHINDEKP. Positions 722 to 753 are disordered; sequence NDDHINDEKPAVNSKYTTPKTSQNITSGVDTP. A compositionally biased stretch (polar residues) spans 735–753; it reads SKYTTPKTSQNITSGVDTP. S800 and S806 each carry phosphoserine. BRCT domains lie at 829-910 and 934-1049; these read FNEL…IDLL and GINE…CVES.

As to quaternary structure, forms a complex with the cullin-RING ligase (CRL) RTT101(MMS1-MMS22). Interacts with MMS22 and RTT101. Interacts with histone H2A; requires H2A to be phosphorylated (gamma-H2A). Interacts with RAD55. In terms of processing, phosphorylated by MEC1.

The protein resides in the nucleus. In terms of biological role, required for resumption of chromosome replication after DNA damage, specifically in S phase. Is recruited to chromatin in the presence of RTT109 and RTT101 in response to stalled replication forks and acts as a scaffold during DNA repair. The sequence is that of Regulator of Ty1 transposition protein 107 (RTT107) from Saccharomyces cerevisiae (strain ATCC 204508 / S288c) (Baker's yeast).